A 1201-amino-acid chain; its full sequence is Coatomer subunit alpha (1201 aa).

WD repeat units follow at residues 9–39 (SKST…QLWD), 51–81 (DHEG…KVWS), 93–123 (GHLD…RIWN), 135–165 (GHNH…RIWD), 207–237 (GHTR…KLWR), and 251–281 (GHTN…RVWD). The segment at 842-862 (AVNTTQEQEEPLGEENFNDED) is disordered. The span at 848-862 (EQEEPLGEENFNDED) shows a compositional bias: acidic residues.

In terms of assembly, oligomeric complex that consists of at least the alpha, beta, beta', gamma, delta, epsilon and zeta subunits. Interacts with the ESCRT-0 subunit VPS27. Interacts with KEI1 (via C-terminal region).

It localises to the cytoplasm. Its subcellular location is the golgi apparatus membrane. The protein localises to the cytoplasmic vesicle. The protein resides in the COPI-coated vesicle membrane. Its function is as follows. The coatomer is a cytosolic protein complex that binds to dilysine motifs and reversibly associates with Golgi non-clathrin-coated vesicles, which further mediate biosynthetic protein transport from the ER, via the Golgi up to the trans Golgi network. Coatomer complex is required for budding from Golgi membranes, and is essential for the retrograde Golgi-to-ER transport of dilysine-tagged proteins. In Saccharomyces cerevisiae (strain ATCC 204508 / S288c) (Baker's yeast), this protein is Coatomer subunit alpha (COP1).